The sequence spans 614 residues: UvrABC system protein C (614 aa).

One can recognise a GIY-YIG domain in the interval 26-104 (NLPGVYKMLG…IKEYRPPYNV (79 aa)). The region spanning 215-250 (SDIHTALIEKMEASAEELDFEKAVFYRDQLSMLREV) is the UVR domain.

This sequence belongs to the UvrC family. As to quaternary structure, interacts with UvrB in an incision complex.

The protein localises to the cytoplasm. Functionally, the UvrABC repair system catalyzes the recognition and processing of DNA lesions. UvrC both incises the 5' and 3' sides of the lesion. The N-terminal half is responsible for the 3' incision and the C-terminal half is responsible for the 5' incision. The protein is UvrABC system protein C of Psychrobacter cryohalolentis (strain ATCC BAA-1226 / DSM 17306 / VKM B-2378 / K5).